The primary structure comprises 30 residues: Trypsin inhibitor 6 (30 aa).

3 cysteine pairs are disulfide-bonded: Cys-4–Cys-21, Cys-11–Cys-23, and Cys-17–Cys-29.

Belongs to the protease inhibitor I7 (squash-type serine protease inhibitor) family.

Its subcellular location is the secreted. Functionally, strongly inhibits trypsin, weakly inhibits chymotrypsin. In Cyclanthera pedata (Achocha), this protein is Trypsin inhibitor 6.